We begin with the raw amino-acid sequence, 413 residues long: Palmitoyltransferase ZDHHC6 (413 aa).

Topologically, residues 1 to 24 are cytoplasmic; that stretch reads MGTFCSVIKFENLQELKRLCHWGP. Residues 25 to 45 traverse the membrane as a helical segment; the sequence is IIALGVIAICSTMAMIDSVLW. Residues 46–57 lie on the Lumenal side of the membrane; the sequence is YWPLHTTGGSVN. The helical transmembrane segment at 58–78 threads the bilayer; that stretch reads FIMLINWTVMILYNYFNAMFV. The Cytoplasmic segment spans residues 79 to 143; it reads GPGFVPLGWK…NCCGYQNHAS (65 aa). The 51-residue stretch at 99 to 149 folds into the DHHC domain; sequence QYCKVCQAYKAPRSHHCRKCNRCVMKMDHHCPWINNCCGYQNHASFTLFLL. Cys-129 serves as the catalytic S-palmitoyl cysteine intermediate. The helical transmembrane segment at 144 to 164 threads the bilayer; it reads FTLFLLLAPLGCIHAAFIFVM. Topologically, residues 165–205 are lumenal; the sequence is TMYTQLYHRLSFGWNTVKIDMSAARRDPLPIVPFGLAAFAT. A helical transmembrane segment spans residues 206–226; it reads TLFALGLALGTTIAVGMLFFI. The Cytoplasmic segment spans residues 227 to 413; that stretch reads QMKIILRNKT…QAPEGEKKNR (187 aa). The 86-residue stretch at 313 to 398 folds into the SH3 domain; the sequence is VRSVRYKVIE…PRKCVEKCPC (86 aa). S-palmitoyl cysteine attachment occurs at residues Cys-328, Cys-329, and Cys-343. The Di-lysine motif motif lies at 410–413; the sequence is KKNR.

This sequence belongs to the DHHC palmitoyltransferase family. In terms of assembly, homooligomerizes. Interacts with SELENOK. Post-translationally, palmitoylated at 3 different sites by ZDHHC16. The combination of the different palmitoylation events strongly affects the quaternary assembly of ZDHHC6, its localization, stability and function. Palmitoylation at Cys-328 accelerates the turnover of ZDHHC6. Depalmitoylated by LYPLA2.

The protein resides in the endoplasmic reticulum membrane. It catalyses the reaction L-cysteinyl-[protein] + hexadecanoyl-CoA = S-hexadecanoyl-L-cysteinyl-[protein] + CoA. The catalysed reaction is L-cysteinyl-[protein] + octadecanoyl-CoA = S-octadecanoyl-L-cysteinyl-[protein] + CoA. Functionally, endoplasmic reticulum palmitoyl acyltransferase that mediates palmitoylation of proteins such as AMFR, CALX, ITPR1 and TFRC. Palmitoylates calnexin (CALX), which is required for its association with the ribosome-translocon complex and efficient folding of glycosylated proteins. Mediates palmitoylation of AMFR, promoting AMFR distribution to the peripheral endoplasmic reticulum. Together with SELENOK, palmitoylates ITPR1 in immune cells, leading to regulate ITPR1 stability and function. Stearoyltransferase that mediates stearoylation of TFRC to inhibit TFRC-mediated activation of the JNK pathway and mitochondrial fragmentation. In Homo sapiens (Human), this protein is Palmitoyltransferase ZDHHC6.